The chain runs to 771 residues: Rho guanine nucleotide exchange factor 6 (771 aa).

Residues 1-111 (MNPEERLVTW…TLLAVNKATE (111 aa)) form the Calponin-homology (CH) domain. Residues 115 to 157 (SERPCGRSSSLSAATSSQTNPQVAVPSTAPEQHSEEKAEMTEN) form a disordered region. Positions 122 to 131 (SSSLSAATSS) are enriched in low complexity. Ser-126 carries the post-translational modification Phosphoserine. Thr-133 bears the Phosphothreonine mark. The 60-residue stretch at 159 to 218 (SHQLIVKARFNFKQTNEDELSVCKGDIIYVTRVEEGGWWEGTLNGRTGWFPSNYVREIKP) folds into the SH3 domain. Ser-224 carries the post-translational modification Phosphoserine. The 181-residue stretch at 240–420 (YYTVVLQNIL…KTLMGQCQDL (181 aa)) folds into the DH domain. In terms of domain architecture, PH spans 442–547 (DIKTLGNVIF…WMEQLNRLTK (106 aa)). Ser-487 is subject to Phosphoserine. Over residues 556-572 (SKTSSSSCSTHSSFSST) the composition is skewed to low complexity. The segment at 556–580 (SKTSSSSCSTHSSFSSTGQPRGPLE) is disordered. A phosphoserine mark is found at Ser-639 and Ser-679.

Interacts with PAK kinases through the SH3 domain. Interacts with GIT1. Component of cytoplasmic complexes, which also contain PXN, GIT1 and PAK1. Interacts with BIN2. Identified in a complex with BIN2 and GIT2. Interacts with PARVB. Interacts with PARVG; the guanine nucleotide exchange factor activity of ARHGEF6 is essential for PARVG-induced enhancement of cell spreading. Detected in adult heart, spleen, lung, skeletal muscle, kidney and testis. Detected throughout embryogenesis.

It localises to the cell projection. It is found in the lamellipodium. Its function is as follows. Acts as a RAC1 guanine nucleotide exchange factor (GEF). The protein is Rho guanine nucleotide exchange factor 6 (Arhgef6) of Mus musculus (Mouse).